A 158-amino-acid polypeptide reads, in one-letter code: MPLLLTGQEFRRDLERDGALALFVPLEGGAETRLMRRLRAVGYKAYLTSAKGLGDPEAYLLKLHEQHVPHLGRRMSTEGKPEGKSVGHVPKVMPMLGPLLEGKSPILLWLLEGQVLSSSELSAISNLPKREPRLKIVVEMGGARALRWESLGKLVESR.

The protein belongs to the complex I NdhN subunit family. NDH-1 can be composed of about 15 different subunits; different subcomplexes with different compositions have been identified which probably have different functions.

The protein localises to the plastid. The protein resides in the organellar chromatophore thylakoid membrane. It carries out the reaction a plastoquinone + NADH + (n+1) H(+)(in) = a plastoquinol + NAD(+) + n H(+)(out). It catalyses the reaction a plastoquinone + NADPH + (n+1) H(+)(in) = a plastoquinol + NADP(+) + n H(+)(out). In terms of biological role, NDH-1 shuttles electrons from an unknown electron donor, via FMN and iron-sulfur (Fe-S) centers, to quinones in the respiratory and/or the photosynthetic chain. The immediate electron acceptor for the enzyme in this species is believed to be plastoquinone. Couples the redox reaction to proton translocation, and thus conserves the redox energy in a proton gradient. The polypeptide is NAD(P)H-quinone oxidoreductase subunit N, organellar chromatophore (Paulinella chromatophora).